The sequence spans 323 residues: Dihydrodiol dehydrogenase 3 (323 aa).

NADP(+) contacts are provided by residues 20–24 (GFGTF) and D50. Residue Y55 is the Proton donor of the active site. H117 provides a ligand contact to substrate. NADP(+)-binding positions include 166 to 167 (SN), Q190, 216 to 221 (YGALGS), and 270 to 280 (KSYNKKRIKEN).

This sequence belongs to the aldo/keto reductase family.

The protein localises to the cytoplasm. This is Dihydrodiol dehydrogenase 3 from Bos taurus (Bovine).